The following is a 105-amino-acid chain: Large ribosomal subunit protein eL36 (105 aa).

Belongs to the eukaryotic ribosomal protein eL36 family. As to quaternary structure, component of the large ribosomal subunit.

It localises to the cytoplasm. The protein localises to the cytosol. Component of the large ribosomal subunit. The ribosome is a large ribonucleoprotein complex responsible for the synthesis of proteins in the cell. The protein is Large ribosomal subunit protein eL36 (rpl36) of Danio rerio (Zebrafish).